Here is a 207-residue protein sequence, read N- to C-terminus: Small ribosomal subunit protein uS4A (207 aa).

The 61-residue stretch at T98–K158 folds into the S4 RNA-binding domain.

This sequence belongs to the universal ribosomal protein uS4 family. As to quaternary structure, part of the 30S ribosomal subunit. Contacts protein S5. The interaction surface between S4 and S5 is involved in control of translational fidelity.

One of the primary rRNA binding proteins, it binds directly to 16S rRNA where it nucleates assembly of the body of the 30S subunit. Its function is as follows. With S5 and S12 plays an important role in translational accuracy. This chain is Small ribosomal subunit protein uS4A, found in Alkaliphilus oremlandii (strain OhILAs) (Clostridium oremlandii (strain OhILAs)).